The following is a 203-amino-acid chain: High frequency lysogenization protein HflD homolog (203 aa).

The protein belongs to the HflD family.

It localises to the cytoplasm. The protein resides in the cell inner membrane. The protein is High frequency lysogenization protein HflD homolog of Histophilus somni (strain 2336) (Haemophilus somnus).